We begin with the raw amino-acid sequence, 237 residues long: Leucyl/phenylalanyl-tRNA--protein transferase (237 aa).

This sequence belongs to the L/F-transferase family.

It localises to the cytoplasm. The enzyme catalyses N-terminal L-lysyl-[protein] + L-leucyl-tRNA(Leu) = N-terminal L-leucyl-L-lysyl-[protein] + tRNA(Leu) + H(+). It carries out the reaction N-terminal L-arginyl-[protein] + L-leucyl-tRNA(Leu) = N-terminal L-leucyl-L-arginyl-[protein] + tRNA(Leu) + H(+). It catalyses the reaction L-phenylalanyl-tRNA(Phe) + an N-terminal L-alpha-aminoacyl-[protein] = an N-terminal L-phenylalanyl-L-alpha-aminoacyl-[protein] + tRNA(Phe). Functions in the N-end rule pathway of protein degradation where it conjugates Leu, Phe and, less efficiently, Met from aminoacyl-tRNAs to the N-termini of proteins containing an N-terminal arginine or lysine. The sequence is that of Leucyl/phenylalanyl-tRNA--protein transferase from Shewanella baltica (strain OS223).